We begin with the raw amino-acid sequence, 660 residues long: GTP-binding protein BRASSINAZOLE INSENSITIVE PALE GREEN 2, chloroplastic (660 aa).

The N-terminal 53 residues, 1 to 53 (MVVLISSTVTICNVKPKLEDGNFRVSRLIHRPEVPFFSGLSNEKKKKCAVSVM), are a transit peptide targeting the chloroplast. Disordered stretches follow at residues 127–158 (EGDE…DDEM) and 191–212 (NDVE…TEEK). Residues 130-158 (EHVENDELAGFEMVDDDADEEEEGEDDEM) are compositionally biased toward acidic residues. The CP-type G domain maps to 273–457 (STRLIKPMSN…MYDTPGLLHP (185 aa)).

It belongs to the TRAFAC class YlqF/YawG GTPase family. In terms of assembly, binds to chloroplast 16S and 23S ribosomal RNAs. As to expression, mostly expressed in stems, petioles, leaves and flowers and, at low levels, also in roots.

It localises to the plastid. It is found in the chloroplast stroma. Its function is as follows. Required for brassinosteroid- (BR) mediated post-transcriptional and translational regulation in the chloroplast, including accumulation of chloroplast rRNA. Involved in chloroplast differentiation. The chain is GTP-binding protein BRASSINAZOLE INSENSITIVE PALE GREEN 2, chloroplastic from Arabidopsis thaliana (Mouse-ear cress).